The primary structure comprises 569 residues: Alpha-keto-acid decarboxylase (569 aa).

Residue Glu-57 coordinates thiamine diphosphate. The segment at 392–474 is thiamine pyrophosphate binding; that stretch reads TAFYGMVEHR…VVVNNDGYTI (83 aa). Mg(2+) is bound by residues Asp-442, Asn-469, and Gly-471.

This sequence belongs to the TPP enzyme family. A metal cation is required as a cofactor. Requires thiamine diphosphate as cofactor.

Decarboxylates branched-chain and aromatic alpha-keto acids to aldehydes. The protein is Alpha-keto-acid decarboxylase (kdc) of Mycobacterium leprae (strain TN).